The primary structure comprises 399 residues: Tyrosine--tRNA ligase (399 aa).

A 'HIGH' region motif is present at residues 42-51 (PTAPDLHLGH). Residues 226-230 (KMSKS) carry the 'KMSKS' region motif. Lysine 229 contributes to the ATP binding site. The region spanning 336–396 (MPIAAVLNKA…GKKAFARITL (61 aa)) is the S4 RNA-binding domain.

It belongs to the class-I aminoacyl-tRNA synthetase family. TyrS type 2 subfamily. In terms of assembly, homodimer.

It localises to the cytoplasm. It catalyses the reaction tRNA(Tyr) + L-tyrosine + ATP = L-tyrosyl-tRNA(Tyr) + AMP + diphosphate + H(+). Its function is as follows. Catalyzes the attachment of tyrosine to tRNA(Tyr) in a two-step reaction: tyrosine is first activated by ATP to form Tyr-AMP and then transferred to the acceptor end of tRNA(Tyr). In Pseudomonas fluorescens (strain Pf0-1), this protein is Tyrosine--tRNA ligase.